The chain runs to 156 residues: MSRRRRPEKREILPDPKFGDQVLSKFMNNLMLDGKKAVAEGIVYTALDTVEAKAKTDPVQLFHDALNNIKPQVEVRSRRVGGATYQVPVEVRPERAQALAIRWMISAARGRPETTMAARLSGELMDAANNRGNAVKKREDAHRMAEANRAFSHYRW.

The protein belongs to the universal ribosomal protein uS7 family. Part of the 30S ribosomal subunit. Contacts proteins S9 and S11.

Functionally, one of the primary rRNA binding proteins, it binds directly to 16S rRNA where it nucleates assembly of the head domain of the 30S subunit. Is located at the subunit interface close to the decoding center, probably blocks exit of the E-site tRNA. The chain is Small ribosomal subunit protein uS7 from Erythrobacter litoralis (strain HTCC2594).